Reading from the N-terminus, the 447-residue chain is Phosphoglucosamine mutase (447 aa).

The Phosphoserine intermediate role is filled by Ser-102. 4 residues coordinate Mg(2+): Ser-102, Asp-241, Asp-243, and Asp-245. Ser-102 is modified (phosphoserine).

Belongs to the phosphohexose mutase family. The cofactor is Mg(2+). Activated by phosphorylation.

The catalysed reaction is alpha-D-glucosamine 1-phosphate = D-glucosamine 6-phosphate. Its function is as follows. Catalyzes the conversion of glucosamine-6-phosphate to glucosamine-1-phosphate. This Pseudomonas syringae pv. tomato (strain ATCC BAA-871 / DC3000) protein is Phosphoglucosamine mutase.